Here is a 440-residue protein sequence, read N- to C-terminus: UDP-N-acetylmuramoylalanine--D-glutamate ligase (440 aa).

115–121 (GSNGKST) is a binding site for ATP.

This sequence belongs to the MurCDEF family.

It is found in the cytoplasm. The enzyme catalyses UDP-N-acetyl-alpha-D-muramoyl-L-alanine + D-glutamate + ATP = UDP-N-acetyl-alpha-D-muramoyl-L-alanyl-D-glutamate + ADP + phosphate + H(+). The protein operates within cell wall biogenesis; peptidoglycan biosynthesis. In terms of biological role, cell wall formation. Catalyzes the addition of glutamate to the nucleotide precursor UDP-N-acetylmuramoyl-L-alanine (UMA). The chain is UDP-N-acetylmuramoylalanine--D-glutamate ligase from Aliivibrio fischeri (strain MJ11) (Vibrio fischeri).